The sequence spans 341 residues: Aromatic amino acid aminotransferase (341 aa).

Lys-213 bears the N6-(pyridoxal phosphate)lysine mark.

Belongs to the class-II pyridoxal-phosphate-dependent aminotransferase family. As to quaternary structure, homodimer. Requires pyridoxal 5'-phosphate as cofactor.

The catalysed reaction is an aromatic L-alpha-amino acid + 2-oxoglutarate = an aromatic oxo-acid + L-glutamate. In terms of biological role, aminotransferase that catalyzes the conversion of aromatic amino acids and 2-oxoglutarate into corresponding aromatic oxo acids and L-glutamate. May catalyze the transamination reaction in phenylalanine biosynthesis. The sequence is that of Aromatic amino acid aminotransferase from Corynebacterium glutamicum (strain ATCC 13032 / DSM 20300 / JCM 1318 / BCRC 11384 / CCUG 27702 / LMG 3730 / NBRC 12168 / NCIMB 10025 / NRRL B-2784 / 534).